We begin with the raw amino-acid sequence, 150 residues long: Cyanate hydratase (150 aa).

Active-site residues include Arg-91, Glu-94, and Ser-117.

Belongs to the cyanase family.

The enzyme catalyses cyanate + hydrogencarbonate + 3 H(+) = NH4(+) + 2 CO2. In terms of biological role, catalyzes the reaction of cyanate with bicarbonate to produce ammonia and carbon dioxide. The polypeptide is Cyanate hydratase (Synechococcus sp. (strain CC9311)).